The following is a 405-amino-acid chain: L-carnitine CoA-transferase (405 aa).

Residues lysine 97 and arginine 104 each contribute to the CoA site. Aspartate 169 acts as the Nucleophile in catalysis.

Belongs to the CoA-transferase III family. CaiB subfamily. In terms of assembly, homodimer.

The protein localises to the cytoplasm. The enzyme catalyses crotonobetainyl-CoA + (R)-carnitine = crotonobetaine + (R)-carnitinyl-CoA. The catalysed reaction is 4-(trimethylamino)butanoyl-CoA + (R)-carnitine = (R)-carnitinyl-CoA + 4-(trimethylamino)butanoate. Its pathway is amine and polyamine metabolism; carnitine metabolism. Functionally, catalyzes the reversible transfer of the CoA moiety from gamma-butyrobetainyl-CoA to L-carnitine to generate L-carnitinyl-CoA and gamma-butyrobetaine. Is also able to catalyze the reversible transfer of the CoA moiety from gamma-butyrobetainyl-CoA or L-carnitinyl-CoA to crotonobetaine to generate crotonobetainyl-CoA. This Salmonella choleraesuis (strain SC-B67) protein is L-carnitine CoA-transferase.